We begin with the raw amino-acid sequence, 191 residues long: UPF0312 protein SO_3370 (191 aa).

An N-terminal signal peptide occupies residues 1-22 (MKKQLFSALIGASLFAPMAVSA).

It belongs to the UPF0312 family. Type 1 subfamily.

The protein localises to the periplasm. In Shewanella oneidensis (strain ATCC 700550 / JCM 31522 / CIP 106686 / LMG 19005 / NCIMB 14063 / MR-1), this protein is UPF0312 protein SO_3370.